The following is a 1173-amino-acid chain: WASH complex subunit 4 (1173 aa).

Ala2 is modified (N-acetylalanine). Ser7 is subject to Phosphoserine. A coiled-coil region spans residues 27–56 (QLKNYGRFLEEYTSQLRRIEDALDDLIGDV). The tract at residues 705-1173 (KDLALFFSLN…STVSADPVVK (469 aa)) is sufficient for interaction with WASHC5. Basic and acidic residues predominate over residues 1141 to 1155 (AEENQEKKEKEEETK). Residues 1141 to 1173 (AEENQEKKEKEEETKTSNGDGPESTVSADPVVK) form a disordered region. Residue Thr1154 is modified to Phosphothreonine.

This sequence belongs to the SWIP family. Component of the WASH core complex also described as WASH regulatory complex (SHRC) composed of WASH (WASHC1, WASH2P or WASH3P), WASHC2 (WASHC2A or WASHC2C), WASHC3, WASHC4 and WASHC5. The WASH core complex associates via WASHC2 with the F-actin-capping protein dimer (formed by CAPZA1, CAPZA2 or CAPZA3 and CAPZB) in a transient or substoichiometric manner which was initially described as WASH complex.

It is found in the early endosome. Acts as a component of the WASH core complex that functions as a nucleation-promoting factor (NPF) at the surface of endosomes, where it recruits and activates the Arp2/3 complex to induce actin polymerization, playing a key role in the fission of tubules that serve as transport intermediates during endosome sorting. The chain is WASH complex subunit 4 from Mus musculus (Mouse).